A 190-amino-acid chain; its full sequence is Large ribosomal subunit protein bL25 (190 aa).

It belongs to the bacterial ribosomal protein bL25 family. CTC subfamily. Part of the 50S ribosomal subunit; part of the 5S rRNA/L5/L18/L25 subcomplex. Contacts the 5S rRNA. Binds to the 5S rRNA independently of L5 and L18.

This is one of the proteins that binds to the 5S RNA in the ribosome where it forms part of the central protuberance. This chain is Large ribosomal subunit protein bL25, found in Neisseria gonorrhoeae (strain ATCC 700825 / FA 1090).